The sequence spans 916 residues: DNA repair endonuclease XPF (916 aa).

The interval 1-457 (MESGQPARRI…EVWMKFRKED (457 aa)) is helicase-like. 2 leucine-zipper regions span residues 233–254 (LNAC…DLSL) and 270–298 (LDPL…LQYL). N6-acetyllysine is present on Lys289. The interval 460 to 487 (KRIRKSHKRPKDPQNKERASTKERTLKK) is disordered. Residues 470 to 483 (KDPQNKERASTKER) show a composition bias toward basic and acidic residues. The Nuclear localization signal motif lies at 486–491 (KKKKRK). Residue Lys500 forms a Glycyl lysine isopeptide (Lys-Gly) (interchain with G-Cter in SUMO2) linkage. Disordered regions lie at residues 502 to 526 (EELE…ESCP) and 660 to 679 (TASA…EQNG). Residue Ser521 is modified to Phosphoserine. Residues 658–813 (RGTASADVST…PSPHATAELF (156 aa)) form a nuclease region. In terms of domain architecture, ERCC4 spans 683-763 (SIVVDMREFR…RPVLLIEFDP (81 aa)). Phosphoserine is present on Ser764. The hhH2, dimerization with ERCC1 stretch occupies residues 837–905 (TLPESEKYNP…QLYDFIHTSF (69 aa)). Lys911 is modified (N6-acetyllysine).

This sequence belongs to the XPF family. As to quaternary structure, heterodimer composed of ERCC1 and ERCC4/XPF. Interacts with SLX4/BTBD12; this interaction is direct and links the ERCC1-ERCC4/XPF complex to SLX4, which may coordinate the action of the structure-specific endonuclease during DNA repair. Requires Mg(2+) as cofactor. Acetylation at Lys-911 by KAT5 promotes interaction with ERCC1 by disrupting a salt bridge between Glu-907 and Lys-911, thereby exposing a second binding site for ERCC1. Deacetylated by SIRT1.

The protein localises to the nucleus. Its subcellular location is the chromosome. Its function is as follows. Catalytic component of a structure-specific DNA repair endonuclease responsible for the 5-prime incision during DNA repair, and which is essential for nucleotide excision repair (NER) and interstrand cross-link (ICL) repair. The polypeptide is DNA repair endonuclease XPF (Homo sapiens (Human)).